A 227-amino-acid chain; its full sequence is Cytochrome c oxidase subunit 2 (227 aa).

Residues 1 to 14 lie on the Mitochondrial intermembrane side of the membrane; sequence MAHPVQLGLQDATS. The chain crosses the membrane as a helical span at residues 15 to 45; sequence PVMEELITFHDYALMTISLISFLVLYALFST. Residues 46–59 are Mitochondrial matrix-facing; sequence LTTKLTNTNITDAQ. Residues 60–87 traverse the membrane as a helical segment; sequence EMETTWTILPAVILILIALPSLRILYLT. Residues 88–227 lie on the Mitochondrial intermembrane side of the membrane; it reads DEINNPSFTI…IFEMGPVFTL (140 aa). Cu cation is bound by residues H161, C196, E198, C200, H204, and M207. Mg(2+) is bound at residue E198.

Belongs to the cytochrome c oxidase subunit 2 family. Component of the cytochrome c oxidase (complex IV, CIV), a multisubunit enzyme composed of 14 subunits. The complex is composed of a catalytic core of 3 subunits MT-CO1, MT-CO2 and MT-CO3, encoded in the mitochondrial DNA, and 11 supernumerary subunits COX4I, COX5A, COX5B, COX6A, COX6B, COX6C, COX7A, COX7B, COX7C, COX8 and NDUFA4, which are encoded in the nuclear genome. The complex exists as a monomer or a dimer and forms supercomplexes (SCs) in the inner mitochondrial membrane with NADH-ubiquinone oxidoreductase (complex I, CI) and ubiquinol-cytochrome c oxidoreductase (cytochrome b-c1 complex, complex III, CIII), resulting in different assemblies (supercomplex SCI(1)III(2)IV(1) and megacomplex MCI(2)III(2)IV(2)). Found in a complex with TMEM177, COA6, COX18, COX20, SCO1 and SCO2. Interacts with TMEM177 in a COX20-dependent manner. Interacts with COX20. Interacts with COX16. It depends on Cu cation as a cofactor.

It is found in the mitochondrion inner membrane. It catalyses the reaction 4 Fe(II)-[cytochrome c] + O2 + 8 H(+)(in) = 4 Fe(III)-[cytochrome c] + 2 H2O + 4 H(+)(out). Functionally, component of the cytochrome c oxidase, the last enzyme in the mitochondrial electron transport chain which drives oxidative phosphorylation. The respiratory chain contains 3 multisubunit complexes succinate dehydrogenase (complex II, CII), ubiquinol-cytochrome c oxidoreductase (cytochrome b-c1 complex, complex III, CIII) and cytochrome c oxidase (complex IV, CIV), that cooperate to transfer electrons derived from NADH and succinate to molecular oxygen, creating an electrochemical gradient over the inner membrane that drives transmembrane transport and the ATP synthase. Cytochrome c oxidase is the component of the respiratory chain that catalyzes the reduction of oxygen to water. Electrons originating from reduced cytochrome c in the intermembrane space (IMS) are transferred via the dinuclear copper A center (CU(A)) of subunit 2 and heme A of subunit 1 to the active site in subunit 1, a binuclear center (BNC) formed by heme A3 and copper B (CU(B)). The BNC reduces molecular oxygen to 2 water molecules using 4 electrons from cytochrome c in the IMS and 4 protons from the mitochondrial matrix. This is Cytochrome c oxidase subunit 2 (MT-CO2) from Chlorocebus aethiops (Green monkey).